The primary structure comprises 736 residues: Krev interaction trapped protein 1 (736 aa).

Positions 1–170 (MGNPENIEDA…DKWLDERHAQ (170 aa)) are N-terminal domain similar to Nudix hydrolase domain. Positions 172–195 (HFIPALFRPSPLERIKTNVINPAY) are interaction with ITGB1BP1. ANK repeat units follow at residues 287 to 316 (VDDF…SVNQ), 320 to 350 (DHWA…NPNL), 354 to 384 (QLSS…DRHI), and 388 to 419 (QGRS…NKPY). The 317-residue stretch at 420 to 736 (EKVRIYRMDG…GQLMPSERNS (317 aa)) folds into the FERM domain. Residues 430-452 (SYRSVELKHGNNTTAQQIMEGMR) form an interaction with RAP1B region.

In terms of assembly, found in a complex, at least composed of ITGB1BP1, KRIT1 and RAP1A. Interacts (via C-terminus FERM domain) with RAP1A (active GTP-bound form preferentially); the interaction does not induce the opening conformation of KRIT1. Interacts (via N-terminus NPXY motif) with ITGB1BP1; the interaction induces the opening conformation of KRIT1 and competes with ITGB1 for ITGB1BP1 interaction. Associates (via N-terminus and C-terminus regions) with microtubules; the interaction is inhibited in presence of ITGB1BP1 and active GTP-bound RAP1A. Interacts (via FERM domain) with RAP1B. Interacts with CDH5. Interacts with RAP1A. Interacts with HEG1 and CCM2; greatly facilitates CCM2-binding to HEG1. Expressed in heart, brain, spleen, lung, thymus, kidney and testis. Isoform 2 was more frequently expressed in the thymus than isoform 1.

The protein localises to the cytoplasm. The protein resides in the cytoskeleton. It localises to the cell membrane. It is found in the cell junction. Its function is as follows. Component of the CCM signaling pathway which is a crucial regulator of heart and vessel formation and integrity. Negative regulator of angiogenesis. Inhibits endothelial proliferation, apoptosis, migration, lumen formation and sprouting angiogenesis in primary endothelial cells. Promotes AKT phosphorylation in a NOTCH-dependent and independent manner, and inhibits ERK1/2 phosphorylation indirectly through activation of the DELTA-NOTCH cascade. Acts in concert with CDH5 to establish and maintain correct endothelial cell polarity and vascular lumen and these effects are mediated by recruitment and activation of the Par polarity complex and RAP1B. Required for the localization of phosphorylated PRKCZ, PARD3, TIAM1 and RAP1B to the cell junction, and cell junction stabilization. Plays a role in integrin signaling via its interaction with ITGB1BP1; this prevents the interaction between ITGB1 and ITGB1BP1. Microtubule-associated protein that binds to phosphatidylinositol 4,5-bisphosphate (PIP2)-containing membranes in a GTP-bound RAP1-dependent manner. Plays an important role in the maintenance of the intracellular reactive oxygen species (ROS) homeostasis to prevent oxidative cellular damage. Regulates the homeostasis of intracellular ROS through an antioxidant pathway involving FOXO1 and SOD2. Facilitates the down-regulation of cyclin-D1 (CCND1) levels required for cell transition from proliferative growth to quiescence by preventing the accumulation of intracellular ROS through the modulation of FOXO1 and SOD2 levels. May play a role in the regulation of macroautophagy through the down-regulation of the mTOR pathway. The chain is Krev interaction trapped protein 1 (Krit1) from Mus musculus (Mouse).